A 172-amino-acid polypeptide reads, in one-letter code: Peptide deformylase-like (172 aa).

Residue E134 is part of the active site.

It belongs to the polypeptide deformylase family.

This Rhizobium meliloti (strain 1021) (Ensifer meliloti) protein is Peptide deformylase-like.